Consider the following 149-residue polypeptide: Protein GR6 (149 aa).

Expressed in fetus (aged from 7 to 8 weeks). Weakly expressed in lymphocytes.

The polypeptide is Protein GR6 (Homo sapiens (Human)).